Consider the following 355-residue polypeptide: S-adenosylmethionine:tRNA ribosyltransferase-isomerase (355 aa).

Belongs to the QueA family. As to quaternary structure, monomer.

Its subcellular location is the cytoplasm. The enzyme catalyses 7-aminomethyl-7-carbaguanosine(34) in tRNA + S-adenosyl-L-methionine = epoxyqueuosine(34) in tRNA + adenine + L-methionine + 2 H(+). It participates in tRNA modification; tRNA-queuosine biosynthesis. Its function is as follows. Transfers and isomerizes the ribose moiety from AdoMet to the 7-aminomethyl group of 7-deazaguanine (preQ1-tRNA) to give epoxyqueuosine (oQ-tRNA). This is S-adenosylmethionine:tRNA ribosyltransferase-isomerase from Aeromonas salmonicida (strain A449).